The chain runs to 191 residues: Adenine phosphoribosyltransferase (191 aa).

It belongs to the purine/pyrimidine phosphoribosyltransferase family. In terms of assembly, homodimer.

Its subcellular location is the cytoplasm. It carries out the reaction AMP + diphosphate = 5-phospho-alpha-D-ribose 1-diphosphate + adenine. It functions in the pathway purine metabolism; AMP biosynthesis via salvage pathway; AMP from adenine: step 1/1. Its function is as follows. Catalyzes a salvage reaction resulting in the formation of AMP, that is energically less costly than de novo synthesis. The sequence is that of Adenine phosphoribosyltransferase from Bordetella bronchiseptica (strain ATCC BAA-588 / NCTC 13252 / RB50) (Alcaligenes bronchisepticus).